A 287-amino-acid polypeptide reads, in one-letter code: Pyridoxal kinase PdxY (287 aa).

Substrate-binding positions include Ser-10 and 45 to 46; that span reads TQ. Residues Asp-112, Ala-144, Glu-149, Lys-182, and 209-212 contribute to the ATP site; that span reads RPLV. Residue Asp-224 coordinates substrate.

The protein belongs to the pyridoxine kinase family. PdxY subfamily. In terms of assembly, homodimer. The cofactor is Mg(2+).

It carries out the reaction pyridoxal + ATP = pyridoxal 5'-phosphate + ADP + H(+). It functions in the pathway cofactor metabolism; pyridoxal 5'-phosphate salvage; pyridoxal 5'-phosphate from pyridoxal: step 1/1. Functionally, pyridoxal kinase involved in the salvage pathway of pyridoxal 5'-phosphate (PLP). Catalyzes the phosphorylation of pyridoxal to PLP. The protein is Pyridoxal kinase PdxY of Shigella sonnei (strain Ss046).